The sequence spans 196 residues: uncharacterized protein (196 aa).

Residues 122–135 are compositionally biased toward basic and acidic residues; it reads SEIEKKQEPIERKT. The segment at 122-150 is disordered; that stretch reads SEIEKKQEPIERKTSTTTNTESNQEKPLR.

This is an uncharacterized protein from Leptospira interrogans.